Here is a 327-residue protein sequence, read N- to C-terminus: Glycerol-3-phosphate acyltransferase (327 aa).

Helical transmembrane passes span 3–23 (SLLWLAVAYVMGSIPFGLLFA), 52–72 (VGVLTLVCDALKGAIPVAVAL), 78–98 (TVFHSLTALAALLGHLYSCFL), 112–132 (VFLPLAFWPLVLSGIACLAVI), and 152–172 (MLLLGGHWKLVPLALVVMVLV). Disordered stretches follow at residues 184–212 (SRGEEKPWQKKHHDAAQGTDAGAAPEAAA) and 233–327 (PSTE…SSGQ). Residues 199–212 (AQGTDAGAAPEAAA) are compositionally biased toward low complexity. The span at 237 to 246 (AAPSQETSDA) shows a compositional bias: polar residues. A compositionally biased stretch (basic and acidic residues) spans 259 to 271 (EGDKRENEEHDNA).

The protein belongs to the PlsY family. In terms of assembly, probably interacts with PlsX.

It localises to the cell inner membrane. The enzyme catalyses an acyl phosphate + sn-glycerol 3-phosphate = a 1-acyl-sn-glycero-3-phosphate + phosphate. The protein operates within lipid metabolism; phospholipid metabolism. Catalyzes the transfer of an acyl group from acyl-phosphate (acyl-PO(4)) to glycerol-3-phosphate (G3P) to form lysophosphatidic acid (LPA). This enzyme utilizes acyl-phosphate as fatty acyl donor, but not acyl-CoA or acyl-ACP. The chain is Glycerol-3-phosphate acyltransferase from Nitratidesulfovibrio vulgaris (strain ATCC 29579 / DSM 644 / CCUG 34227 / NCIMB 8303 / VKM B-1760 / Hildenborough) (Desulfovibrio vulgaris).